We begin with the raw amino-acid sequence, 476 residues long: Cytosolic iron-sulfur assembly component 3 (476 aa).

Ala-2 is modified (N-acetylalanine). Cys-24, Cys-71, Cys-74, Cys-77, Cys-190, and Cys-246 together coordinate [4Fe-4S] cluster. A disordered region spans residues 297-316 (DGLTSSVSAEEPSSHRGGGS). Cys-395 and Cys-399 together coordinate [4Fe-4S] cluster.

Belongs to the NARF family. As to quaternary structure, external component of the CIA complex. In the CIA complex, interacts directly with CIAO1 and MMS19.

In terms of biological role, component of the cytosolic iron-sulfur protein assembly (CIA) complex, a multiprotein complex that mediates the incorporation of iron-sulfur cluster into extramitochondrial Fe/S proteins. Seems to negatively regulate the level of HIF1A expression, although this effect could be indirect. This chain is Cytosolic iron-sulfur assembly component 3 (Ciao3), found in Mus musculus (Mouse).